Reading from the N-terminus, the 1708-residue chain is Rapamycin-insensitive companion of mTOR (1708 aa).

Residues 1–789 (MAAIGRGRSL…DKANLHALIQ (789 aa)) are interaction with NBN. Phosphoserine is present on residues serine 21, serine 35, and serine 265. Residue lysine 274 forms a Glycyl lysine isopeptide (Lys-Gly) (interchain with G-Cter in ubiquitin) linkage. The ribosome-binding domain stretch occupies residues 521-570 (LKDTEEALLINLRDSQVLQHKENLDWDWNLIGTILKWPNVNLRNYKDEQL). Residues asparagine 543, arginine 572, and arginine 576 each contribute to the ATP site. Residues 1021 to 1043 (TLSLNSESTSSRHNSESESAPSS) are compositionally biased toward low complexity. A disordered region spans residues 1021-1045 (TLSLNSESTSSRHNSESESAPSSMF). Residues lysine 1092 and lysine 1095 each carry the N6-acetyllysine modification. 2 disordered regions span residues 1101-1198 (SLTL…ENTS) and 1218-1247 (SFNTDTTTSGISSMSSSPSRETVAVDPTAM). Threonine 1103 is modified (phosphothreonine). 3 positions are modified to N6-acetyllysine: lysine 1116, lysine 1119, and lysine 1125. Threonine 1135 carries the post-translational modification Phosphothreonine; by RPS6KB1. Serine 1138 bears the Phosphoserine mark. Residues 1147–1158 (FTSSSAQKSLQL) are compositionally biased toward polar residues. Phosphoserine is present on residues serine 1161, serine 1218, and serine 1234. Residues 1221–1239 (TDTTTSGISSMSSSPSRET) show a composition bias toward low complexity. The residue at position 1270 (threonine 1270) is a Phosphothreonine. A phosphoserine mark is found at serine 1273, serine 1277, serine 1281, and serine 1283. Residue threonine 1294 is modified to Phosphothreonine. A phosphoserine mark is found at serine 1301 and serine 1312. Threonine 1331 carries the phosphothreonine modification. Phosphoserine is present on residues serine 1345 and serine 1352. Threonine 1375 carries the phosphothreonine modification. Serine 1384 is subject to Phosphoserine. Position 1385 is a phosphotyrosine (tyrosine 1385). A phosphoserine mark is found at serine 1387, serine 1395, and serine 1410. The Zn(2+) site is built by histidine 1514, cysteine 1519, and cysteine 1522. Residues serine 1570, serine 1573, serine 1576, and serine 1591 each carry the phosphoserine modification. Cysteine 1651 contacts Zn(2+).

It belongs to the RICTOR family. Component of the mechanistic target of rapamycin complex 2 (mTORC2), consisting in two heterotretramers composed of MTOR, MLST8, RICTOR and MAPKAP1/SIN1. The mTORC2 core complex associates with PRR5/PROTOR1 and/or PRR5L/PROTOR2. Contrary to mTORC1, mTORC2 does not bind to and is not sensitive to FKBP12-rapamycin. Binds directly to MTOR and PRR5 within the TORC2 complex; interaction with MTOR is enhanced by deubiquitination of RICTOR by USP9X. Interaction with MAPKAP1 is not enhanced by RICTOR deubiquitination by USP9X. Interacts with CCDC28B. Interacts with NBN. Interacts with SIK3. Interacts with NCKAP1L. Interacts with ARMH4 (via cytoplasmic tail); this interaction bridges ARMH4 to the mTORC2 complex and inhibits the mTORC2 kinase activity. Interacts with UBXN2A. Interacts with TSPAN8. Phosphorylated by MTOR; when part of mTORC2. Phosphorylated at Thr-1135 by RPS6KB1 downstream of the mTORC1 complex: phosphorylation of RICTOR inhibits mTORC2 signaling by creating a binding site for 14-3-3 proteins. Phosphorylated at Ser-1234 by GSK3B in response to endoplasmic stress, inhibiting mTORC2 signaling. In terms of processing, ubiquitinated by the SCF(FBXW7) complex, leading to its degradation by the proteasome. Deubiquitinated by USP9X; deubiquitination stabilizes RICTOR and enhances its binding to MTOR, thus promoting mTORC2 complex assembly. Post-translationally, acetylated by EP300/p300 in response to glucose, leading to activate the mTORC2 complex. Acetylation by BLOC1S1/GCN5L1 in response to hypotoxic stress protects RICTOR against ubiquitination and subsequent degradation by the proteasome. In terms of tissue distribution, highest levels in liver and brain with expression also detected in heart, muscle, spleen and kidney (at protein level).

It is found in the cell membrane. The protein localises to the endoplasmic reticulum membrane. Its subcellular location is the lysosome membrane. Its function is as follows. Component of the mechanistic target of rapamycin complex 2 (mTORC2), which transduces signals from growth factors to pathways involved in proliferation, cytoskeletal organization, lipogenesis and anabolic output. In response to growth factors, mTORC2 phosphorylates and activates AGC protein kinase family members, including AKT (AKT1, AKT2 and AKT3), PKC (PRKCA, PRKCB and PRKCE) and SGK1. In contrast to mTORC1, mTORC2 is nutrient-insensitive. Within the mTORC2 complex, RICTOR probably acts as a molecular adapter. RICTOR is responsible for the FKBP12-rapamycin-insensitivity of mTORC2. mTORC2 plays a critical role in AKT1 activation by mediating phosphorylation of different sites depending on the context, such as 'Thr-450', 'Ser-473', 'Ser-477' or 'Thr-479', facilitating the phosphorylation of the activation loop of AKT1 on 'Thr-308' by PDPK1/PDK1 which is a prerequisite for full activation. mTORC2 catalyzes the phosphorylation of SGK1 at 'Ser-422' and of PRKCA on 'Ser-657'. The mTORC2 complex also phosphorylates various proteins involved in insulin signaling, such as FBXW8 and IGF2BP1. mTORC2 acts upstream of Rho GTPases to regulate the actin cytoskeleton, probably by activating one or more Rho-type guanine nucleotide exchange factors. mTORC2 promotes the serum-induced formation of stress-fibers or F-actin. Plays an essential role in embryonic growth and development. The chain is Rapamycin-insensitive companion of mTOR from Mus musculus (Mouse).